Reading from the N-terminus, the 440-residue chain is Xylose isomerase (440 aa).

Catalysis depends on residues His100 and Asp103. The Mg(2+) site is built by Glu231, Glu267, His270, Asp295, Asp306, Asp308, and Asp338.

The protein belongs to the xylose isomerase family. As to quaternary structure, homotetramer. Mg(2+) is required as a cofactor.

It is found in the cytoplasm. The enzyme catalyses alpha-D-xylose = alpha-D-xylulofuranose. The polypeptide is Xylose isomerase (Burkholderia cenocepacia (strain HI2424)).